Reading from the N-terminus, the 324-residue chain is Polyketide biosynthesis acyltransferase homolog PksD (324 aa).

Serine 99 is a catalytic residue.

It localises to the cytoplasm. It functions in the pathway antibiotic biosynthesis; bacillaene biosynthesis. Probably involved in some intermediate steps for the synthesis of the antibiotic polyketide bacillaene which is involved in secondary metabolism. The chain is Polyketide biosynthesis acyltransferase homolog PksD (pksD) from Bacillus subtilis (strain 168).